Here is a 729-residue protein sequence, read N- to C-terminus: MGTPGSGRKRTQIKDRFSAEDEALSHIAREAEARLAAKRAARAEARDIRMRELERQQKELTHRYHDKKWGQIQKWMEDSDHARHLQRSSHRHSMASSRVTPNHRSSSVDVSGSHRGRESISRRRDSVYNTLKDSSRRTSNSYSNSYDVKNTTSSSHRDLLSGLYHDQRKYSSLKYNKPISTHHIRSSSLYSEPLATKRTYGTSLYKDGLYNASSSRAPSEYSCYSSRASSARSSPVCSDDEGSVSYSSCRGRRDSVSSDFSDQSESAADYFSRSNRRGSIVSDVDDVSIPDLNSLDEKTDKQFTTENYSRPSSRNATSGIPGTFTPLSGSSSRRGSGDASCSLDPDASLSELRDIYDLKDQIQDVEGRYMQGLKELRESLAEVEEKYKKAMVSNAQLDNEKSNLVYHVDTLKDVIEEMEEQMAEYHRENEEKSKELERQKHNCSILQHKLDEHKEGIRQRDEFIEENQRMQQRVDSLVREVYDLQETINWKDKKIGALERQKEYFDCIKNERDELRDELTAVKEKVKIGEKHGLVIIPDGTPNGDINHEPMVGAITVVSQEAAHVLESAGEGPLDVRLRKLAEEKEELVAQIRKLKLQKDDERQKSAKNNSTTTDPTGLENGSDLQLIEMQRDANRQISEYKFRLSKSEQDITTLEQNVMRLEGQVVRYKSAAENAEKVEDELKAEKRRLQRELRTALDKMEEMEMTNNHLVKRLEKMKANRTALLSQQ.

The stretch at 27 to 69 (IAREAEARLAAKRAARAEARDIRMRELERQQKELTHRYHDKKW) forms a coiled coil. Disordered regions lie at residues 80–156 (DHAR…SSSH), 230–268 (SARS…ESAA), and 289–344 (IPDL…CSLD). Positions 84–93 (HLQRSSHRHS) are enriched in basic residues. Polar residues predominate over residues 99 to 110 (VTPNHRSSSVDV). Basic and acidic residues predominate over residues 115 to 126 (RGRESISRRRDS). Composition is skewed to low complexity over residues 137–147 (RTSNSYSNSYD) and 257–268 (SSDFSDQSESAA). Polar residues predominate over residues 304-320 (TTENYSRPSSRNATSGI). Coiled coils occupy residues 357–531 (DLKD…IGEK) and 574–722 (LDVR…KANR). The segment at 600–621 (DDERQKSAKNNSTTTDPTGLEN) is disordered. Residues 607-616 (AKNNSTTTDP) are compositionally biased toward polar residues.

The protein belongs to the LRRFIP family.

May function as activator of the canonical Wnt signaling pathway upstream of ctnnb1/beta-catenin. Might be required for dorsal axis formation. The sequence is that of Leucine-rich repeat flightless-interacting protein 2 (lrrfip2) from Xenopus laevis (African clawed frog).